Reading from the N-terminus, the 357-residue chain is NAD kinase 1 (357 aa).

The active-site Proton acceptor is the Asp68. NAD(+) contacts are provided by residues 68 to 69 (DG), Arg73, 175 to 176 (ND), Arg186, Asp205, Ala240, and Gln275.

Belongs to the NAD kinase family. Requires a divalent metal cation as cofactor.

The protein localises to the cytoplasm. It catalyses the reaction NAD(+) + ATP = ADP + NADP(+) + H(+). In terms of biological role, involved in the regulation of the intracellular balance of NAD and NADP, and is a key enzyme in the biosynthesis of NADP. Catalyzes specifically the phosphorylation on 2'-hydroxyl of the adenosine moiety of NAD to yield NADP. This Streptomyces avermitilis (strain ATCC 31267 / DSM 46492 / JCM 5070 / NBRC 14893 / NCIMB 12804 / NRRL 8165 / MA-4680) protein is NAD kinase 1.